A 155-amino-acid polypeptide reads, in one-letter code: Cyanate hydratase (155 aa).

Residues R95, E98, and S121 contribute to the active site.

This sequence belongs to the cyanase family.

The enzyme catalyses cyanate + hydrogencarbonate + 3 H(+) = NH4(+) + 2 CO2. Its function is as follows. Catalyzes the reaction of cyanate with bicarbonate to produce ammonia and carbon dioxide. This Pseudomonas syringae pv. syringae (strain B728a) protein is Cyanate hydratase.